We begin with the raw amino-acid sequence, 86 residues long: ATP synthase subunit c (86 aa).

Transmembrane regions (helical) follow at residues 8 to 28 (VLGC…GPGI) and 64 to 84 (TTGL…PLLG).

Belongs to the ATPase C chain family. In terms of assembly, F-type ATPases have 2 components, F(1) - the catalytic core - and F(0) - the membrane proton channel. F(1) has five subunits: alpha(3), beta(3), gamma(1), delta(1), epsilon(1). F(0) has three main subunits: a(1), b(2) and c(10-14). The alpha and beta chains form an alternating ring which encloses part of the gamma chain. F(1) is attached to F(0) by a central stalk formed by the gamma and epsilon chains, while a peripheral stalk is formed by the delta and b chains.

It is found in the cell membrane. Its function is as follows. F(1)F(0) ATP synthase produces ATP from ADP in the presence of a proton or sodium gradient. F-type ATPases consist of two structural domains, F(1) containing the extramembraneous catalytic core and F(0) containing the membrane proton channel, linked together by a central stalk and a peripheral stalk. During catalysis, ATP synthesis in the catalytic domain of F(1) is coupled via a rotary mechanism of the central stalk subunits to proton translocation. In terms of biological role, key component of the F(0) channel; it plays a direct role in translocation across the membrane. A homomeric c-ring of between 10-14 subunits forms the central stalk rotor element with the F(1) delta and epsilon subunits. This chain is ATP synthase subunit c, found in Lachnoclostridium phytofermentans (strain ATCC 700394 / DSM 18823 / ISDg) (Clostridium phytofermentans).